Reading from the N-terminus, the 120-residue chain is NAD(P)H-quinone oxidoreductase subunit 3, chloroplastic (120 aa).

The next 3 membrane-spanning stretches (helical) occupy residues 9–29 (IFWA…LISG), 64–84 (MFAL…PWAM), and 88–108 (VLGV…IVGS).

The protein belongs to the complex I subunit 3 family. In terms of assembly, NDH is composed of at least 16 different subunits, 5 of which are encoded in the nucleus.

The protein localises to the plastid. It localises to the chloroplast thylakoid membrane. It catalyses the reaction a plastoquinone + NADH + (n+1) H(+)(in) = a plastoquinol + NAD(+) + n H(+)(out). It carries out the reaction a plastoquinone + NADPH + (n+1) H(+)(in) = a plastoquinol + NADP(+) + n H(+)(out). Its function is as follows. NDH shuttles electrons from NAD(P)H:plastoquinone, via FMN and iron-sulfur (Fe-S) centers, to quinones in the photosynthetic chain and possibly in a chloroplast respiratory chain. The immediate electron acceptor for the enzyme in this species is believed to be plastoquinone. Couples the redox reaction to proton translocation, and thus conserves the redox energy in a proton gradient. The sequence is that of NAD(P)H-quinone oxidoreductase subunit 3, chloroplastic from Acorus calamus var. americanus (American sweet flag).